A 550-amino-acid polypeptide reads, in one-letter code: Flagellin (550 aa).

This sequence belongs to the bacterial flagellin family.

It is found in the secreted. It localises to the bacterial flagellum. Its function is as follows. Flagellin is the subunit protein which polymerizes to form the filaments of bacterial flagella. This chain is Flagellin (fliC), found in Shigella flexneri.